The chain runs to 381 residues: Cobalt-precorrin-5B C(1)-methyltransferase (381 aa).

It belongs to the CbiD family.

It carries out the reaction Co-precorrin-5B + S-adenosyl-L-methionine = Co-precorrin-6A + S-adenosyl-L-homocysteine. It participates in cofactor biosynthesis; adenosylcobalamin biosynthesis; cob(II)yrinate a,c-diamide from sirohydrochlorin (anaerobic route): step 6/10. Its function is as follows. Catalyzes the methylation of C-1 in cobalt-precorrin-5B to form cobalt-precorrin-6A. The chain is Cobalt-precorrin-5B C(1)-methyltransferase from Methylococcus capsulatus (strain ATCC 33009 / NCIMB 11132 / Bath).